Here is a 246-residue protein sequence, read N- to C-terminus: Pyridoxine 5'-phosphate synthase (246 aa).

Asn7 lines the 3-amino-2-oxopropyl phosphate pocket. 9 to 10 (DH) is a binding site for 1-deoxy-D-xylulose 5-phosphate. Arg18 serves as a coordination point for 3-amino-2-oxopropyl phosphate. His43 acts as the Proton acceptor in catalysis. 2 residues coordinate 1-deoxy-D-xylulose 5-phosphate: Arg45 and His50. The active-site Proton acceptor is the Glu70. Residue Thr100 coordinates 1-deoxy-D-xylulose 5-phosphate. His190 (proton donor) is an active-site residue. Residues Gly191 and 212-213 (GH) each bind 3-amino-2-oxopropyl phosphate.

This sequence belongs to the PNP synthase family. In terms of assembly, homooctamer; tetramer of dimers.

The protein resides in the cytoplasm. The enzyme catalyses 3-amino-2-oxopropyl phosphate + 1-deoxy-D-xylulose 5-phosphate = pyridoxine 5'-phosphate + phosphate + 2 H2O + H(+). It participates in cofactor biosynthesis; pyridoxine 5'-phosphate biosynthesis; pyridoxine 5'-phosphate from D-erythrose 4-phosphate: step 5/5. Catalyzes the complicated ring closure reaction between the two acyclic compounds 1-deoxy-D-xylulose-5-phosphate (DXP) and 3-amino-2-oxopropyl phosphate (1-amino-acetone-3-phosphate or AAP) to form pyridoxine 5'-phosphate (PNP) and inorganic phosphate. The chain is Pyridoxine 5'-phosphate synthase from Bordetella petrii (strain ATCC BAA-461 / DSM 12804 / CCUG 43448).